Consider the following 246-residue polypeptide: Pyridoxine 5'-phosphate synthase (246 aa).

A 3-amino-2-oxopropyl phosphate-binding site is contributed by N12. Residue 14–15 (DH) coordinates 1-deoxy-D-xylulose 5-phosphate. R23 is a binding site for 3-amino-2-oxopropyl phosphate. H48 serves as the catalytic Proton acceptor. 1-deoxy-D-xylulose 5-phosphate is bound by residues R50 and H55. E75 functions as the Proton acceptor in the catalytic mechanism. T105 lines the 1-deoxy-D-xylulose 5-phosphate pocket. The active-site Proton donor is the H196. 3-amino-2-oxopropyl phosphate contacts are provided by residues G197 and 218-219 (GH).

Belongs to the PNP synthase family. As to quaternary structure, homooctamer; tetramer of dimers.

The protein resides in the cytoplasm. It carries out the reaction 3-amino-2-oxopropyl phosphate + 1-deoxy-D-xylulose 5-phosphate = pyridoxine 5'-phosphate + phosphate + 2 H2O + H(+). It participates in cofactor biosynthesis; pyridoxine 5'-phosphate biosynthesis; pyridoxine 5'-phosphate from D-erythrose 4-phosphate: step 5/5. Functionally, catalyzes the complicated ring closure reaction between the two acyclic compounds 1-deoxy-D-xylulose-5-phosphate (DXP) and 3-amino-2-oxopropyl phosphate (1-amino-acetone-3-phosphate or AAP) to form pyridoxine 5'-phosphate (PNP) and inorganic phosphate. The sequence is that of Pyridoxine 5'-phosphate synthase from Pseudomonas putida (strain GB-1).